The primary structure comprises 58 residues: Cecropin-A (58 aa).

The signal sequence occupies residues 1–23; sequence MNFSKIFIFVVLAVLLLCSQTEA. Residue L57 is modified to Leucine amide.

The protein belongs to the cecropin family. As to expression, relatively abundant in head, thorax and to a lesser extent in abdominal carcass and anterior midgut.

It localises to the secreted. Functionally, antibacterial activity against several Gram-positive and Gram-negative bacteria. Antifungal activity against A.fumigatus, B.cinerea, F.culmorum, F.oxysporum, N.crassa, C.albicans, C.neoformans and S.cerevisiae. This Anopheles gambiae (African malaria mosquito) protein is Cecropin-A (CecA).